We begin with the raw amino-acid sequence, 188 residues long: Protein GrpE (188 aa).

Positions Met1–His30 are disordered. A compositionally biased stretch (basic and acidic residues) spans His8 to His30.

It belongs to the GrpE family. Homodimer.

Its subcellular location is the cytoplasm. Its function is as follows. Participates actively in the response to hyperosmotic and heat shock by preventing the aggregation of stress-denatured proteins, in association with DnaK and GrpE. It is the nucleotide exchange factor for DnaK and may function as a thermosensor. Unfolded proteins bind initially to DnaJ; upon interaction with the DnaJ-bound protein, DnaK hydrolyzes its bound ATP, resulting in the formation of a stable complex. GrpE releases ADP from DnaK; ATP binding to DnaK triggers the release of the substrate protein, thus completing the reaction cycle. Several rounds of ATP-dependent interactions between DnaJ, DnaK and GrpE are required for fully efficient folding. In Chlorobium phaeobacteroides (strain BS1), this protein is Protein GrpE.